A 301-amino-acid chain; its full sequence is Probable alpha-L-glutamate ligase (301 aa).

In terms of domain architecture, ATP-grasp spans leucine 104 to glutamate 287. ATP is bound by residues lysine 141, glutamate 178–phenylalanine 179, aspartate 187, and arginine 211–asparagine 213. Residues aspartate 248, glutamate 260, and asparagine 262 each coordinate Mg(2+). Mn(2+) is bound by residues aspartate 248, glutamate 260, and asparagine 262.

It belongs to the RimK family. It depends on Mg(2+) as a cofactor. The cofactor is Mn(2+).

This chain is Probable alpha-L-glutamate ligase, found in Vibrio parahaemolyticus serotype O3:K6 (strain RIMD 2210633).